We begin with the raw amino-acid sequence, 360 residues long: Leukotriene B4 receptor 2 (360 aa).

Residues 1–24 (MSVCYRPPGNETLLSWKGSRATGT) lie on the Extracellular side of the membrane. Asn-10 carries N-linked (GlcNAc...) asparagine glycosylation. The chain crosses the membrane as a helical span at residues 25–45 (AFLLLAALLGLPGNGFVVWSL). At 46-60 (AGWRPTAGRPLAATL) the chain is on the cytoplasmic side. The chain crosses the membrane as a helical span at residues 61 to 81 (VLHLALADGAVLLLTPLFVAF). Residues 82-96 (LSQEAWPLGQVGCKA) are Extracellular-facing. Residues 97–117 (VYYVCALSMYASVLLTGLLSL) form a helical membrane-spanning segment. The Cytoplasmic segment spans residues 118–140 (QRCLAVTRPFLAPRLRSPALARR). Residues 141 to 161 (LLLGVWLAALVLAVPAAVYRH) traverse the membrane as a helical segment. At 162–185 (LWGGRVCQLCHPSPVHAAAHLSLE) the chain is on the extracellular side. Residues 186–206 (TLTAFVLPFGTVLGCYGVTLA) form a helical membrane-spanning segment. Topologically, residues 207–224 (RLRGARWGSGRQGTRVGR) are cytoplasmic. Residues 225 to 245 (LVSAIVLAFGLLWAPYHAVNL) form a helical membrane-spanning segment. Residues 246–275 (LQAVAALAPPEGPLARLGGAGQAARAGTTA) lie on the Extracellular side of the membrane. The chain crosses the membrane as a helical span at residues 276-296 (LAFFSSSVNPVLYVFTAGDLL). The Cytoplasmic portion of the chain corresponds to 297 to 360 (PRAGPRFLTR…GKTEKDSQEW (64 aa)). The disordered stretch occupies residues 311–360 (SGEARGGSRSREGTMELRTTPKLKVMGQGRGNGDPGGGDGGKTEKDSQEW). A compositionally biased stretch (gly residues) spans 338 to 350 (QGRGNGDPGGGDG). The span at 351–360 (GKTEKDSQEW) shows a compositional bias: basic and acidic residues.

Belongs to the G-protein coupled receptor 1 family.

Its subcellular location is the cell membrane. In terms of biological role, low-affinity receptor for leukotrienes including leukotriene B4. Mediates chemotaxis of granulocytes and macrophages. The response is mediated via G-proteins that activate a phosphatidylinositol-calcium second messenger system. This is Leukotriene B4 receptor 2 (Ltb4r2) from Mus musculus (Mouse).